A 499-amino-acid polypeptide reads, in one-letter code: Circadian clock oscillator protein KaiC (499 aa).

KaiC domains lie at 1–243 and 257–499; these read MQSS…VSVF and VRIS…DERA. The ATP site is built by glycine 45, threonine 46, glycine 47, lysine 48, threonine 49, serine 85, lysine 220, leucine 221, arginine 222, threonine 224, histidine 226, threonine 286, glycine 287, threonine 288, glycine 289, lysine 290, threonine 291, and leucine 292. Residue threonine 49 coordinates Mg(2+). Position 291 (threonine 291) interacts with Mg(2+). Glutamate 314 serves as a coordination point for Mg(2+). An ATP-binding site is contributed by tryptophan 327. Position 427 is a phosphoserine; by autocatalysis (serine 427). The residue at position 428 (threonine 428) is a Phosphothreonine; by autocatalysis. Residues arginine 447, lysine 453, methionine 454, arginine 455, serine 457, histidine 459, and lysine 461 each coordinate ATP.

It belongs to the KaiC family. As to quaternary structure, homohexamer; hexamerization is dependent on ATP-binding. Component of the KaiBC complex. KaiC interacts with SasA, activating its autokinase function and leading to RpaA activation. Mg(2+) serves as cofactor. Phosphorylated on serine and threonine residues by autocatalysis. Has a 4 step phosphorylation cycle; the autokinase acts first on Thr-428, then Ser-427. When Ser-427 is modified KaiC switches to an autophosphatase mode, acting first on phospho-Thr-428 then phospho-Ser-427.

The enzyme catalyses L-seryl-[protein] + ATP = O-phospho-L-seryl-[protein] + ADP + H(+). It carries out the reaction L-threonyl-[protein] + ATP = O-phospho-L-threonyl-[protein] + ADP + H(+). The catalysed reaction is ATP + H2O = ADP + phosphate + H(+). Functionally, central component of the KaiBC oscillator complex, which constitutes the main circadian regulator in cyanobacteria. Its composition changes during the circadian cycle to control KaiC phosphorylation. Autophosphorylates and has a weak ATPase activity; ATPase activity defines the circadian period. This Prochlorococcus marinus (strain MIT 9313) protein is Circadian clock oscillator protein KaiC.